The sequence spans 476 residues: Sulfate adenylyltransferase subunit 1 (476 aa).

Positions 24–239 constitute a tr-type G domain; the sequence is KSMLRFLTCG…VLENVDIDQK (216 aa). Positions 33–40 are G1; sequence GSVDDGKS. GTP is bound at residue 33–40; it reads GSVDDGKS. The G2 stretch occupies residues 91 to 95; that stretch reads GITID. Residues 112 to 115 are G3; that stretch reads DTPG. Residues 112–116 and 167–170 each bind GTP; these read DTPGH and NKMD. Positions 167 to 170 are G4; that stretch reads NKMD. Residues 205–207 form a G5 region; the sequence is SAL.

Belongs to the TRAFAC class translation factor GTPase superfamily. Classic translation factor GTPase family. CysN/NodQ subfamily. In terms of assembly, heterodimer composed of CysD, the smaller subunit, and CysN.

It catalyses the reaction sulfate + ATP + H(+) = adenosine 5'-phosphosulfate + diphosphate. It functions in the pathway sulfur metabolism; hydrogen sulfide biosynthesis; sulfite from sulfate: step 1/3. Functionally, with CysD forms the ATP sulfurylase (ATPS) that catalyzes the adenylation of sulfate producing adenosine 5'-phosphosulfate (APS) and diphosphate, the first enzymatic step in sulfur assimilation pathway. APS synthesis involves the formation of a high-energy phosphoric-sulfuric acid anhydride bond driven by GTP hydrolysis by CysN coupled to ATP hydrolysis by CysD. The sequence is that of Sulfate adenylyltransferase subunit 1 from Vibrio atlanticus (strain LGP32) (Vibrio splendidus (strain Mel32)).